A 252-amino-acid polypeptide reads, in one-letter code: Small ribosomal subunit protein eS4 (252 aa).

The 64-residue stretch at 43–106 (LPLLILVRDM…NKYYRVIPVP (64 aa)) folds into the S4 RNA-binding domain.

This sequence belongs to the eukaryotic ribosomal protein eS4 family.

This chain is Small ribosomal subunit protein eS4, found in Desulfurococcus amylolyticus (strain DSM 18924 / JCM 16383 / VKM B-2413 / 1221n) (Desulfurococcus kamchatkensis).